The chain runs to 647 residues: Calmodulin-binding protein 60 B (647 aa).

Polar residues predominate over residues 1–10; it reads MMDSGNNNMN. The interval 1–26 is disordered; that stretch reads MMDSGNNNMNRAKRNLDGNDDDQPER. The segment at 8 to 85 is calmodulin-binding; that stretch reads NMNRAKRNLD…TGSSGSSPKR (78 aa). A Nuclear localization signal motif is present at residues 12–19; the sequence is AKRNLDGN. Positions 155-278 are DNA-binding; it reads EDDEDWTQEE…AFHKKLTAEG (124 aa).

This sequence belongs to the plant ACBP60 protein family. Interacts with calmodulin (CaM). In terms of tissue distribution, expressed in leaves, stems, flowers, developing seeds and root.

It localises to the nucleus. In terms of biological role, transcription activator that binds DNA in a sequence-specific manner, likely 5'-GAAATTTTGG-3', to promote the expression of target genes. This is Calmodulin-binding protein 60 B from Arabidopsis thaliana (Mouse-ear cress).